A 182-amino-acid polypeptide reads, in one-letter code: Large ribosomal subunit protein uL6 (182 aa).

Belongs to the universal ribosomal protein uL6 family. Part of the 50S ribosomal subunit.

Its function is as follows. This protein binds to the 23S rRNA, and is important in its secondary structure. It is located near the subunit interface in the base of the L7/L12 stalk, and near the tRNA binding site of the peptidyltransferase center. The protein is Large ribosomal subunit protein uL6 of Methanococcus vannielii.